The following is a 501-amino-acid chain: Sugar phosphate exchanger 3 (501 aa).

A helical transmembrane segment spans residues 20 to 40 (CTHHHIVVFLLTFFSYSLLHA). The N-linked (GlcNAc...) asparagine glycan is linked to asparagine 62. Transmembrane regions (helical) follow at residues 87–107 (TLFL…GLFV), 119–139 (WVLS…GTLT), 153–173 (LWVV…AVMG), 183–203 (FVFG…AFLA), and 214–234 (AFLV…CGLL). Asparagine 273 carries N-linked (GlcNAc...) asparagine glycosylation. The next 6 helical transmembrane spans lie at 298 to 320 (GVVL…FFWL), 340 to 360 (IWYD…SDVL), 364 to 384 (APVL…YSRS), 393 to 413 (VIMA…SSAI), 435 to 455 (GIVD…VSLI), and 459 to 479 (LGWM…ILFI).

Belongs to the major facilitator superfamily. Organophosphate:Pi antiporter (OPA) (TC 2.A.1.4) family.

It localises to the endoplasmic reticulum membrane. The protein resides in the lysosome membrane. Functionally, unlike the other SLC37 members, seems to lack glucose-6-phosphate antiporter activity. This chain is Sugar phosphate exchanger 3 (SLC37A3), found in Gallus gallus (Chicken).